The chain runs to 164 residues: NADH-quinone oxidoreductase subunit I (164 aa).

2 4Fe-4S ferredoxin-type domains span residues 55-85 and 95-124; these read LRRY…IDAE and TRYD…EGPN. Positions 65, 68, 71, 75, 104, 107, 110, and 114 each coordinate [4Fe-4S] cluster.

It belongs to the complex I 23 kDa subunit family. In terms of assembly, NDH-1 is composed of 14 different subunits. Subunits NuoA, H, J, K, L, M, N constitute the membrane sector of the complex. [4Fe-4S] cluster serves as cofactor.

Its subcellular location is the cell inner membrane. The enzyme catalyses a quinone + NADH + 5 H(+)(in) = a quinol + NAD(+) + 4 H(+)(out). NDH-1 shuttles electrons from NADH, via FMN and iron-sulfur (Fe-S) centers, to quinones in the respiratory chain. The immediate electron acceptor for the enzyme in this species is believed to be ubiquinone. Couples the redox reaction to proton translocation (for every two electrons transferred, four hydrogen ions are translocated across the cytoplasmic membrane), and thus conserves the redox energy in a proton gradient. The protein is NADH-quinone oxidoreductase subunit I of Ruegeria pomeroyi (strain ATCC 700808 / DSM 15171 / DSS-3) (Silicibacter pomeroyi).